We begin with the raw amino-acid sequence, 1335 residues long: Bifunctional autolysin (1335 aa).

Positions 1-29 (MAKKFNYKLPSMVALTLFGTAFTAHQANA) are cleaved as a signal peptide. 3 disordered regions span residues 51 to 88 (QAEK…QSTT), 100 to 262 (NEIS…KYKE), and 514 to 535 (WGTT…NNKL). Composition is skewed to polar residues over residues 58 to 88 (EVTQ…QSTT), 100 to 127 (NEIS…VTKN), 143 to 155 (TDTN…QSVA), 176 to 223 (TASQ…NASG), and 244 to 258 (SLNN…TTSY). Residues 303–863 (VSSQKTSSLP…LSTQSTPAPK (561 aa)) are N-acetylmuramoyl-L-alanine amidase. Low complexity predominate over residues 515 to 531 (GTTSTKPSQPSKPSGGT). GW domains lie at 533 to 610 (NKLT…YNTA), 612 to 686 (APVK…TASK), 700 to 774 (TVTN…YNTA), 776 to 850 (SPVK…APSK), 868 to 943 (STQT…TQNI), 945 to 1020 (KQTQ…QNST), and 1023 to 1096 (QSTP…KEKI). Residues 864 to 1335 (QVKPSTQTVN…GKYFEIPIYK (472 aa)) form an endo-beta-N-acetylglucosaminidase region.

The protein in the N-terminal section; belongs to the N-acetylmuramoyl-L-alanine amidase 2 family. In the C-terminal section; belongs to the glycosyl hydrolase 73 family. In terms of assembly, oligomer; forms a ring structure at the cell surface which is important for efficient partitioning of daughter cells after cell division. In terms of processing, undergoes proteolytic processing to generate the two extracellular lytic enzymes, probably at the septal region on the cell surface.

The protein localises to the secreted. The catalysed reaction is Hydrolyzes the link between N-acetylmuramoyl residues and L-amino acid residues in certain cell-wall glycopeptides.. It carries out the reaction an N(4)-(oligosaccharide-(1-&gt;3)-[oligosaccharide-(1-&gt;6)]-beta-D-Man-(1-&gt;4)-beta-D-GlcNAc-(1-&gt;4)-alpha-D-GlcNAc)-L-asparaginyl-[protein] + H2O = an oligosaccharide-(1-&gt;3)-[oligosaccharide-(1-&gt;6)]-beta-D-Man-(1-&gt;4)-D-GlcNAc + N(4)-(N-acetyl-beta-D-glucosaminyl)-L-asparaginyl-[protein]. Its function is as follows. Endohydrolysis of the di-N-acetylchitobiosyl unit in high-mannose glycopeptides and glycoproteins containing the -[(Man)5(GlcNAc)2]-Asn structure. One N-acetyl-D-glucosamine residue remains attached to the protein; the rest of the oligosaccharide is released intact. Cleaves the peptidoglycan connecting the daughter cells at the end of the cell division cycle, resulting in the separation of the two newly divided cells. Acts as an autolysin in penicillin-induced lysis. The sequence is that of Bifunctional autolysin (atl) from Staphylococcus epidermidis (strain ATCC 12228 / FDA PCI 1200).